Consider the following 474-residue polypeptide: Trehalose-6-phosphate synthase (474 aa).

R10 contacts D-glucose 6-phosphate. 22–23 (GG) contacts UDP-alpha-D-glucose. D-glucose 6-phosphate-binding residues include Y77 and D131. Residues R263 and K268 each coordinate UDP-alpha-D-glucose. Residue R301 coordinates D-glucose 6-phosphate. Residues F340 and 366–370 (LVAKE) contribute to the UDP-alpha-D-glucose site.

This sequence belongs to the glycosyltransferase 20 family. As to quaternary structure, homotetramer.

The catalysed reaction is D-glucose 6-phosphate + UDP-alpha-D-glucose = alpha,alpha-trehalose 6-phosphate + UDP + H(+). It functions in the pathway glycan biosynthesis; trehalose biosynthesis. In terms of biological role, probably involved in the osmoprotection via the biosynthesis of trehalose. Catalyzes the transfer of glucose from UDP-alpha-D-glucose (UDP-Glc) to D-glucose 6-phosphate (Glc-6-P) to form trehalose-6-phosphate. Acts with retention of the anomeric configuration of the UDP-sugar donor. The protein is Trehalose-6-phosphate synthase of Escherichia coli O6:K15:H31 (strain 536 / UPEC).